Consider the following 315-residue polypeptide: tRNA dimethylallyltransferase (315 aa).

Position 11–18 (11–18 (GPTASGKS)) interacts with ATP. 13–18 (TASGKS) provides a ligand contact to substrate. 2 interaction with substrate tRNA regions span residues 36–39 (DSMQ) and 160–164 (QRLIR).

This sequence belongs to the IPP transferase family. Monomer. Requires Mg(2+) as cofactor.

It catalyses the reaction adenosine(37) in tRNA + dimethylallyl diphosphate = N(6)-dimethylallyladenosine(37) in tRNA + diphosphate. Catalyzes the transfer of a dimethylallyl group onto the adenine at position 37 in tRNAs that read codons beginning with uridine, leading to the formation of N6-(dimethylallyl)adenosine (i(6)A). The sequence is that of tRNA dimethylallyltransferase from Rickettsia bellii (strain OSU 85-389).